We begin with the raw amino-acid sequence, 2376 residues long: MGNQRNRVNLNPFRFWVFELREILREIKNYRYLGNYRYFGPLGSFIHIFVHQERFLKLLDPRIWSVLRSQGSTGVVLFLVAVLIYRINNRNMIERKNIYLTGLLPIPTNFAGPRNETLEESFLSSNINRLIVSLLHLPKGKRLSESCFLDPKESTRVLPITKWRNWIGKRRDSSQLKGSSDQSRDHFDSIGTEDSEYHTLINQREIQQRKERSSLLDPSFLQTERTEIESDRFSKGLSGSSSKSRLFTEGEKEMNNHLPPEEIEEFLGNPTRSILSFFSDEWSELHLGSNPTERSTVDQKLLKKEQEVSFAPFRRSETKEIVNLFKTMAYLQKTVSIHPISSDPGCDMVPKDELDSEERFQEMADLFTLSITEPDLVYHKGFAFSIDSSVLDQKQFLAEARDESKKKSLLVLPPVFYQENESFYRRIRKRGVQISCGNDLEDPKPKIVVFASNNIVEAVNQYRWIRNLIQIQYSTHGYIRNVLNRFFLMNRSDRNFEYGIQRDQIGNDTLNHRTFMKYTINQHLSNLKKSQKKGSDPLILISRTERSVNRDPNAYRYKWSKGSKNFQEHLEHFVSEQKSRFQVVFDRYRSIRNRYRSIRNRYRSRINQYSSDRSEVSDKKDNRYRSRINQYSSDRSEVSDQKNLAKFRSFVFSKLLLFLSNSLPFFFVSFGNTPPIQRSEIRVSELKGPNDRLCNQFLESIGLQLVYLKKLKPFLLDDHETSQKSKLLFNKKPEGMIDSFHTRNNRGKSLDSYFSMISHDQDNWLNPVKPFHRSSLISSFYKANRLRFLNNPHDFGFFCNKRFPFYVDIKNLDFTYGQFLNILFIRNTKFSLCGDKKKHAFLERDTISSIESQVSNLFKDFPQSGDERYNFYKYFHLAMRSDPLVRRAIYSIADISGTPLTEGQRVNFERTYCQPLSDMNLSDSEGKNLYQYLNFNSNMGLIYSEKCFSSEKRKKKKPEKRKEKKPEKRKEKKPEKRKEKKPEKRKEKKPEKRKEKKPEKRKEKKPEKRKEKKQSLYLKQWVEKVQRDRALQGERVSLILSNWNLFKTYVMPFSLTSTGYNLLKLMFLDTLGSYVMPLLRSSPKFVSICYAISDPCGISWRILQKKLCLLQWNWISAISNKCFHKLLLSEESIHRNNESPSMTDLRWPNLGEFLYSILFLLLVAGHLVFSHLLFFSQAFSELQRDFARAQSLMIPSYIVELRELLDMYPAPRSFKKLFLAAREKLVNYLRWGGGRKSFLIHLFELLNITPNPIDRIAFLKNTRHLSHTSKELYSLITELGDFSSLCSGQRYRYDQIIENVNGPCCLIDDKIESWISNCDAIEDKEREFLVPFCNFTRETRIDQILLSLTHSDHLSNNDSASQMSEEPGAFYLRHLVDIHKKGLMNYECNTSCLAERRIFLAHYQTITYSPCGDNRSHFPSHGKTFSLRLPLHPSRATLVIGSIGSGRSYLVKSLATNSYVPLITVVLNKFLKNWTPQGFDIHESGVYDEYGDDAEEANDYGASFFDFLDNDSDDYEDRDSDDYDEPGASDDYEPGDMEDFVDSEMTEWLTKTNVPLVYQLLDDEIDEFYITLQFELAKAMSPCILWIPNIHDLDAKESDYLSLGLLVNHLSRDCGRRSTKNEILVIASTHIPQKVDPSLIGPDGLSTCIKTRRLLVPQQQQCLFTLSYTRGFHLENKMFHTHTNEFESTILGPSVPDLVALTNEALSISITQKKSIIDTTTIRYALHRKTWDLEADRNLSPAKEHGTLFYQVGRAFAHTVLLRNCPIDPISIYIKKNLCEAGDSSLYKWYFELGTSMKKLTILLYLLTCSAGSIAQDLLSPPGPDEQNLITSYGLVENDSDLVHGLSDIVHGLLELEGALVGSSPTEEEVEGTEEEVEGTEEEVEGTEDEEVEGTEEEVEGTEEEVEGTEEEVEGTEDEEVEGTEEEVEGTEDEEGEGTEEEVEGTEEEVEGTEDEEGEGTEEEVEGTEEEVEGTEDEEGEGTEEEVEGTEEEVEGTEEEVEGTEEEVEGTEDEEGEGTEDEEGEGTEKDSSQFDNDRVTLLLRPKPRNPLDIQRLIYQHQKYESELEEDDDDDEDVFAPQKMLEDLFSELVWSPRIWHPWDFILDCEAEIPAEEIPEEEDPLPEEALETEVAVWGEEEEGEADDEEDERLEAQQEDELLEEEDEELKEEEDELHEEEEEEEEEEEEEEEEEDELHEEEEEEEEEDELQENDSEFFRSETQQPQARDGFSEEEGCFRISQFMWVPGDPLSFLYKDTPFVEVLSYPEEATEISKELLRLLNPKTKRDAPKRARQRWWTKKKQDKHYELVLDRQRWLITKSSLSKSNGFFRSNTPSESYQYLSNLFLSNRRLLDQITKTFFRKKWLFPDEMKIGFMEQ.

Disordered regions lie at residues 173-194, 226-256, and 952-1011; these read SSQL…GTED, TEIE…EMNN, and KRKK…KRKE. Residues 235–245 are compositionally biased toward low complexity; sequence KGLSGSSSKSR. Basic and acidic residues-rich tracts occupy residues 246 to 255 and 960 to 1009; these read LFTEGEKEMN and KRKE…PEKR. 1441 to 1448 lines the ATP pocket; that stretch reads GSIGSGRS. Disordered stretches follow at residues 1515 to 1534, 1860 to 2046, and 2112 to 2230; these read YEDR…DYEP, LVGS…LRPK, and PAEE…DGFS. Acidic residues predominate over residues 1866–2025; it reads TEEEVEGTEE…GEGTEDEEGE (160 aa). Residues 2026–2038 are compositionally biased toward basic and acidic residues; it reads GTEKDSSQFDNDR. Acidic residues-rich tracts occupy residues 2112-2129 and 2136-2213; these read PAEE…EALE and GEEE…ENDS.

It belongs to the Ycf2 family.

It is found in the plastid. It localises to the chloroplast stroma. Its function is as follows. Probable ATPase of unknown function. Its presence in a non-photosynthetic plant (Epifagus virginiana) and experiments in tobacco indicate that it has an essential function which is probably not related to photosynthesis. This chain is Protein Ycf2, found in Oenothera glazioviana (Large-flowered evening primrose).